We begin with the raw amino-acid sequence, 165 residues long: Urease accessory protein UreE (165 aa).

Residues 137–156 form a disordered region; the sequence is EAGAYQSAPHGHSHAHGHDH.

This sequence belongs to the UreE family.

It is found in the cytoplasm. Its function is as follows. Involved in urease metallocenter assembly. Binds nickel. Probably functions as a nickel donor during metallocenter assembly. The sequence is that of Urease accessory protein UreE from Pseudomonas putida (strain GB-1).